The primary structure comprises 157 residues: Putative pre-16S rRNA nuclease (157 aa).

It belongs to the YqgF nuclease family.

Its subcellular location is the cytoplasm. Could be a nuclease involved in processing of the 5'-end of pre-16S rRNA. The sequence is that of Putative pre-16S rRNA nuclease from Anaplasma marginale (strain St. Maries).